Consider the following 244-residue polypeptide: Venom nerve growth factor (244 aa).

The N-terminal stretch at 1–18 (MSMLCYTLIIAFLIGIWA) is a signal peptide. The propeptide occupies 19–125 (APKSEDNVSL…SLNRNIRAKR (107 aa)). 3 disulfides stabilise this stretch: cysteine 139–cysteine 204, cysteine 182–cysteine 232, and cysteine 192–cysteine 234. N-linked (GlcNAc...) asparagine glycosylation is present at asparagine 148.

This sequence belongs to the NGF-beta family. In terms of assembly, homodimer; non-covalently linked. Post-translationally, N-glycosylated. In terms of tissue distribution, expressed by the venom gland.

It is found in the secreted. Its function is as follows. Nerve growth factor is important for the development and maintenance of the sympathetic and sensory nervous systems. It stimulates division and differentiation of sympathetic and embryonic sensory neurons as well as basal forebrain cholinergic neurons in the brain. Its relevance in the snake venom is not clear. However, it has been shown to inhibit metalloproteinase-dependent proteolysis of platelet glycoprotein Ib alpha, suggesting a metalloproteinase inhibition to prevent metalloprotease autodigestion and/or protection against prey proteases. Binds a lipid between the two protein chains in the homodimer. The lipid-bound form promotes histamine relase from mouse mast cells, contrary to the lipid-free form. It promotes neurite outgrowth in rat PC12 pheochromocytoma cells. This is Venom nerve growth factor from Macrovipera lebetinus (Levantine viper).